The chain runs to 157 residues: 2-C-methyl-D-erythritol 2,4-cyclodiphosphate synthase (157 aa).

A divalent metal cation contacts are provided by Asp-8 and His-10. Residues 8 to 10 (DVH) and 34 to 35 (HS) each bind 4-CDP-2-C-methyl-D-erythritol 2-phosphate. His-42 lines the a divalent metal cation pocket. 4-CDP-2-C-methyl-D-erythritol 2-phosphate is bound by residues 56–58 (DIG), 61–65 (FPDTD), 100–106 (AQAPKMA), 132–135 (TTTE), Phe-139, and Arg-142.

Belongs to the IspF family. As to quaternary structure, homotrimer. The cofactor is a divalent metal cation.

It carries out the reaction 4-CDP-2-C-methyl-D-erythritol 2-phosphate = 2-C-methyl-D-erythritol 2,4-cyclic diphosphate + CMP. Its pathway is isoprenoid biosynthesis; isopentenyl diphosphate biosynthesis via DXP pathway; isopentenyl diphosphate from 1-deoxy-D-xylulose 5-phosphate: step 4/6. In terms of biological role, involved in the biosynthesis of isopentenyl diphosphate (IPP) and dimethylallyl diphosphate (DMAPP), two major building blocks of isoprenoid compounds. Catalyzes the conversion of 4-diphosphocytidyl-2-C-methyl-D-erythritol 2-phosphate (CDP-ME2P) to 2-C-methyl-D-erythritol 2,4-cyclodiphosphate (ME-CPP) with a corresponding release of cytidine 5-monophosphate (CMP). In Stutzerimonas stutzeri (strain A1501) (Pseudomonas stutzeri), this protein is 2-C-methyl-D-erythritol 2,4-cyclodiphosphate synthase.